We begin with the raw amino-acid sequence, 153 residues long: LOB domain-containing protein 26 (153 aa).

Residues 4-105 (NPCEVCRFQN…EEVSKTKKLL (102 aa)) form the LOB domain. The interval 126–153 (KSKPSVLRKRKRKTKSSDESAIRVVEDS) is disordered. Over residues 140–153 (KSSDESAIRVVEDS) the composition is skewed to basic and acidic residues.

Belongs to the LOB domain-containing protein family.

The polypeptide is LOB domain-containing protein 26 (LBD26) (Arabidopsis thaliana (Mouse-ear cress)).